A 316-amino-acid chain; its full sequence is Transaldolase (316 aa).

Lys132 functions as the Schiff-base intermediate with substrate in the catalytic mechanism.

The protein belongs to the transaldolase family. Type 1 subfamily. In terms of assembly, homodimer.

It is found in the cytoplasm. The catalysed reaction is D-sedoheptulose 7-phosphate + D-glyceraldehyde 3-phosphate = D-erythrose 4-phosphate + beta-D-fructose 6-phosphate. Its pathway is carbohydrate degradation; pentose phosphate pathway; D-glyceraldehyde 3-phosphate and beta-D-fructose 6-phosphate from D-ribose 5-phosphate and D-xylulose 5-phosphate (non-oxidative stage): step 2/3. Its function is as follows. Transaldolase is important for the balance of metabolites in the pentose-phosphate pathway. The protein is Transaldolase of Vibrio vulnificus (strain YJ016).